We begin with the raw amino-acid sequence, 279 residues long: Lacto-N-neotetraose biosynthesis glycosyltransferase LgtB (279 aa).

The protein belongs to the glycosyltransferase 25 family.

Its pathway is glycan metabolism; lacto-N-neotetraose biosynthesis. The protein operates within bacterial outer membrane biogenesis; lipooligosaccharide biosynthesis. Functionally, adds the second galactose to the lacto-N-tetraose chain in lipooligosaccharide (LOS). The protein is Lacto-N-neotetraose biosynthesis glycosyltransferase LgtB (lgtB) of Neisseria meningitidis serogroup A / serotype 4A (strain DSM 15465 / Z2491).